The following is a 157-amino-acid chain: Root allergen protein (157 aa).

It belongs to the BetVI family.

The protein is Root allergen protein of Taraxacum officinale (Common dandelion).